The following is a 239-amino-acid chain: Small ribosomal subunit protein uS5 (239 aa).

The segment at 1–62 is disordered; the sequence is MADETEIQAA…DDRRGSEEQG (62 aa). Over residues 9–19 the composition is skewed to low complexity; the sequence is AAAPAEAAPGA. Over residues 34–62 the composition is skewed to basic and acidic residues; sequence GGNDRGGDRGRGRDGRGRRDDRRGSEEQG. The region spanning 65–128 is the S5 DRBM domain; sequence LIEKLVHINR…AAAKKAMVRV (64 aa).

The protein belongs to the universal ribosomal protein uS5 family. As to quaternary structure, part of the 30S ribosomal subunit. Contacts proteins S4 and S8.

Its function is as follows. With S4 and S12 plays an important role in translational accuracy. Functionally, located at the back of the 30S subunit body where it stabilizes the conformation of the head with respect to the body. The polypeptide is Small ribosomal subunit protein uS5 (Rhizorhabdus wittichii (strain DSM 6014 / CCUG 31198 / JCM 15750 / NBRC 105917 / EY 4224 / RW1) (Sphingomonas wittichii)).